Here is a 125-residue protein sequence, read N- to C-terminus: uncharacterized protein (125 aa).

Belongs to the asfivirus B125R family.

This is an uncharacterized protein from African swine fever virus (isolate Pig/Kenya/KEN-50/1950) (ASFV).